The primary structure comprises 273 residues: Suppressor protein STM1 (273 aa).

The tract at residues 1 to 153 (MSNPFDLLGN…PKTAQLSLQD (153 aa)) is disordered. Serine 2 is subject to N-acetylserine. Phosphoserine; by MTOR occurs at positions 32, 41, and 45. Lysine 46 is covalently cross-linked (Glycyl lysine isopeptide (Lys-Gly) (interchain with G-Cter in ubiquitin)). A phosphoserine; by MTOR mark is found at serine 55 and serine 73. Serine 55 is subject to Phosphoserine. 3 stretches are compositionally biased toward basic and acidic residues: residues 60–77 (AIRDKTAGRRNNRSKDVT), 89–104 (RATDRHSRTGKTDTKK), and 111–124 (GDDKKELSAEKEAQ). Serine 118 is subject to Phosphoserine. Glycyl lysine isopeptide (Lys-Gly) (interchain with G-Cter in ubiquitin) cross-links involve residues lysine 121 and lysine 171. At threonine 181 the chain carries Phosphothreonine; by MTOR. A Glycyl lysine isopeptide (Lys-Gly) (interchain with G-Cter in ubiquitin) cross-link involves residue lysine 184. The residue at position 218 (threonine 218) is a Phosphothreonine; by MTOR. The segment at 219 to 273 (RKNFGDRNNNSRNNFNNRRGGRGARKGNNTANATNSANTVQKNRNIDVSNLPSLA) is disordered. Low complexity-rich tracts occupy residues 224 to 236 (DRNNNSRNNFNNR) and 244 to 257 (KGNNTANATNSANT). Serine 229 carries the phosphoserine modification. Residues 258–273 (VQKNRNIDVSNLPSLA) are compositionally biased toward polar residues.

It belongs to the SERBP1-HABP4 family. As to quaternary structure, associates with mature 80S ribosomes. Binds to the head domain of the 40S ribosomal subunit and prevents mRNA binding by inserting its alpha-helix domain towards the mRNA entry tunnel at the decoding site, where it blocks the binding of tRNA and mRNA at the A- and P-sites. Interacts with EFT1; interaction sequesters EFT1 at the A-site of the ribosome, thereby blocking the interaction sites of the mRNA-tRNA complex, promoting ribosome stabilization and hibernation. Interacts with CDC13. Associates with the telomere-proximal Y' element. Phosphorylation by TORC1 upon nutrient replenishment inhibits STM1 and causes its release from dormant ribosomes.

The protein resides in the cytoplasm. Its subcellular location is the nucleus. It localises to the perinuclear region. Its function is as follows. Ribosome preservation factor that protect a small pool of nontranslating, vacant ribosomes in cells under nutrient starvation conditions. Under nutrient-limiting conditions, cells reduce ribosome biogenesis and degrade ribosomes via autophagy (ribophagy) or proteasomal degradation. To avoid excessive degradation during starvation, STM1 binds to and protects 80S ribosomes from proteasomal degradation. Under nutrient-sufficient conditions, TORC1 phosphorylates and inhibits STM1 to prevent formation of dormant 80S ribosomes. Acts as an inhibitor of mRNA translation by promoting ribosome hibernation: clamps the two ribosomal subunits, thereby preventing their dissociation, and inhibits translation by excluding mRNA-binding. Acts via its association with eEF2 (EFT1), promoting ribosome stabilization and storage in an inactive state. May also repress translation by preventing association of eEF3 (YEF3 and HEF3) with ribosomes. Binds specifically G4 quadruplex (these are four-stranded right-handed helices, stabilized by guanine base quartets) and purine motif triplex (characterized by a third, antiparallel purine-rich DNA strand located within the major groove of a homopurine stretch of duplex DNA) nucleic acid structures. These structures may be present at telomeres or in rRNAs. Acts with CDC13 to control telomere length homeostasis. Involved in the control of the apoptosis-like cell death. In Saccharomyces cerevisiae (strain ATCC 204508 / S288c) (Baker's yeast), this protein is Suppressor protein STM1.